Here is a 117-residue protein sequence, read N- to C-terminus: Hainantoxin-XV.2 (117 aa).

The first 20 residues, 1 to 20 (MKLCAVIIASLLVCAAVASS), serve as a signal peptide directing secretion. The disordered stretch occupies residues 18–55 (ASSSDNQKEFAQEKEMTREETQSLGEHEKDDEVTGSEE). Residues 21 to 56 (SDNQKEFAQEKEMTREETQSLGEHEKDDEVTGSEER) constitute a propeptide that is removed on maturation. Residues 23-55 (NQKEFAQEKEMTREETQSLGEHEKDDEVTGSEE) show a composition bias toward basic and acidic residues. 4 cysteine pairs are disulfide-bonded: Cys-58-Cys-72, Cys-65-Cys-78, Cys-69-Cys-115, and Cys-71-Cys-91.

The protein belongs to the neurotoxin 03 (Tx2) family. 02 subfamily. HNTX-XV sub-subfamily. In terms of tissue distribution, expressed by the venom gland.

It localises to the secreted. Its function is as follows. Putative ion channel inhibitor. The chain is Hainantoxin-XV.2 from Cyriopagopus hainanus (Chinese bird spider).